The sequence spans 1066 residues: Thyrotropin-releasing hormone-degrading ectoenzyme (1066 aa).

The span at Met-1–Lys-14 shows a compositional bias: basic and acidic residues. The disordered stretch occupies residues Met-1–Gly-43. Residues Met-1–Leu-81 are Cytoplasmic-facing. Over residues Lys-15–Lys-25 the composition is skewed to basic residues. Residue Thr-71 is modified to Phosphothreonine; by PKC. A helical; Signal-anchor for type II membrane protein membrane pass occupies residues Val-82 to Leu-102. The Extracellular segment spans residues Ser-103–His-1066. Residues Gly-117–Pro-177 form a disordered region. Residues Thr-118 to Glu-127 show a composition bias toward gly residues. Asn-131 is a glycosylation site (N-linked (GlcNAc...) asparagine). Positions His-143–Gly-154 are enriched in basic and acidic residues. Residues Asn-202, Asn-217, Asn-264, and Asn-380 are each glycosylated (N-linked (GlcNAc...) asparagine). Substrate is bound at residue Ala-446–Asn-450. His-482 lines the Zn(2+) pocket. Glu-483 (proton acceptor) is an active-site residue. Zn(2+) is bound by residues His-486 and Glu-505. N-linked (GlcNAc...) asparagine glycans are attached at residues Asn-647, Asn-676, Asn-691, Asn-705, Asn-726, Asn-842, and Asn-948.

The protein belongs to the peptidase M1 family. In terms of assembly, homodimer; disulfide-linked. Zn(2+) serves as cofactor. Predominantly expressed in brain and pituitary. Lower levels in lung and liver.

It localises to the membrane. The catalysed reaction is Release of the N-terminal pyroglutamyl group from pGlu-|-His-Xaa tripeptides and pGlu-|-His-Xaa-Gly tetrapeptides.. Its function is as follows. Specific inactivation of TRH after its release. The polypeptide is Thyrotropin-releasing hormone-degrading ectoenzyme (Trhde) (Rattus norvegicus (Rat)).